Consider the following 544-residue polypeptide: Lysophosphatidylcholine acyltransferase 2 (544 aa).

Residues Met-1–Gln-57 lie on the Cytoplasmic side of the membrane. A helical; Signal-anchor for type II membrane protein transmembrane segment spans residues Ile-58–Leu-78. Residues Leu-79–Asp-544 are Lumenal-facing. The short motif at His-146 to Asp-151 is the HXXXXD motif element. The EGTC motif motif lies at Glu-220 to Cys-223. 2 consecutive EF-hand domains span residues Pro-391–Pro-426 and Asn-428–Val-463. Residues Asp-404, Asn-406, Asp-408, Ser-410, Glu-415, Asp-441, Asp-443, Asp-445, Tyr-447, and Glu-452 each contribute to the Ca(2+) site. Polar residues predominate over residues Val-518–Val-529. The disordered stretch occupies residues Val-518–Asp-544. Basic and acidic residues predominate over residues Ser-530–Asp-544.

Belongs to the 1-acyl-sn-glycerol-3-phosphate acyltransferase family.

It is found in the endoplasmic reticulum membrane. The protein localises to the golgi apparatus membrane. Its subcellular location is the cell membrane. The protein resides in the lipid droplet. The catalysed reaction is a 1-acyl-sn-glycero-3-phosphocholine + an acyl-CoA = a 1,2-diacyl-sn-glycero-3-phosphocholine + CoA. It carries out the reaction a 1-O-alkyl-sn-glycero-3-phosphocholine + acetyl-CoA = a 1-O-alkyl-2-acetyl-sn-glycero-3-phosphocholine + CoA. It catalyses the reaction a 1-acyl-sn-glycero-3-phosphate + an acyl-CoA = a 1,2-diacyl-sn-glycero-3-phosphate + CoA. The enzyme catalyses a 1-O-(1Z-alkenyl)-sn-glycero-3-phosphocholine + an acyl-CoA = a 1-O-(1Z-alkenyl)-2-acyl-sn-glycero-3-phosphocholine + CoA. The catalysed reaction is 1-hexadecanoyl-sn-glycero-3-phosphate + (9Z)-octadecenoyl-CoA = 1-hexadecanoyl-2-(9Z-octadecenoyl)-sn-glycero-3-phosphate + CoA. It carries out the reaction 1-(9Z-octadecenoyl)-sn-glycero-3-phosphate + (9Z)-octadecenoyl-CoA = 1,2-di-(9Z-octadecenoyl)-sn-glycero-3-phosphate + CoA. It catalyses the reaction 1-(9Z-octadecenoyl)-sn-glycero-3-phosphate + hexadecanoyl-CoA = 1-(9Z)-octadecenoyl-2-hexadecanoyl-sn-glycero-3-phosphate + CoA. The enzyme catalyses 1-heptadecanoyl-sn-glycero-3-phosphate + (9Z)-octadecenoyl-CoA = 1-heptadecanoyl-2-(9Z)-octadecenoyl-sn-glycero-3-phosphate + CoA. The catalysed reaction is 1-octadecanoyl-sn-glycero-3-phosphate + (9Z)-octadecenoyl-CoA = 1-octadecanoyl-2-(9Z-octadecenoyl)-sn-glycero-3-phosphate + CoA. It carries out the reaction heptadecanoyl-CoA + 1-(9Z-octadecenoyl)-sn-glycero-3-phosphate = 1-(9Z)-octadecenoyl-2-heptadecanoyl-sn-glycero-3-phosphate + CoA. It catalyses the reaction 1-(9Z-octadecenoyl)-sn-glycero-3-phosphate + (9Z,12Z)-octadecadienoyl-CoA = 1-(9Z)-octadecenoyl-2-(9Z,12Z)-octadecadienoyl-sn-glycero-3-phosphate + CoA. The enzyme catalyses 1-(9Z-octadecenoyl)-sn-glycero-3-phosphate + tetradecanoyl-CoA = 1-(9Z)-octadecenoyl-2-tetradecanoyl-sn-glycero-3-phosphate + CoA. The catalysed reaction is pentadecanoyl-CoA + 1-(9Z-octadecenoyl)-sn-glycero-3-phosphate = 1-(9Z)-octadecenoyl-2-pentadecanoyl-sn-glycero-3-phosphate + CoA. It carries out the reaction nonadecanoyl-CoA + 1-(9Z-octadecenoyl)-sn-glycero-3-phosphate = 1-(9Z)-octadecenoyl-2-nonadecanoyl-sn-glycero-3-phosphate + CoA. It catalyses the reaction 1-hexadecanoyl-sn-glycero-3-phosphocholine + (9Z)-octadecenoyl-CoA = 1-hexadecanoyl-2-(9Z-octadecenoyl)-sn-glycero-3-phosphocholine + CoA. The enzyme catalyses 1-O-hexadecyl-sn-glycero-3-phosphocholine + acetyl-CoA = 1-O-hexadecyl-2-acetyl-sn-glycero-3-phosphocholine + CoA. The catalysed reaction is 1-O-octadecyl-sn-glycero-3-phosphocholine + acetyl-CoA = 1-O-octadecyl-2-acetyl-sn-glycero-3-phosphocholine + CoA. It carries out the reaction 1-hexadecanoyl-sn-glycero-3-phosphocholine + acetyl-CoA = 1-hexadecanoyl-2-acetyl-sn-glycero-3-phosphocholine + CoA. It catalyses the reaction 1-octadecanoyl-sn-glycero-3-phosphocholine + acetyl-CoA = 1-octadecanoyl-2-acetyl-sn-glycero-3-phosphocholine + CoA. The enzyme catalyses a 1-O-(1Z-alkenyl)-sn-glycero-3-phosphocholine + acetyl-CoA = 1-O-(1Z)-alkenyl-2-acetyl-sn-glycero-3-phosphocholine + CoA. The catalysed reaction is 1-O-octadecyl-sn-glycero-3-phosphocholine + (5Z,8Z,11Z,14Z)-eicosatetraenoyl-CoA = 1-O-octadecyl-2-(5Z,8Z,11Z,14Z)-eicosatetraenoyl-sn-glycero-3-phosphocholine + CoA. It participates in lipid metabolism; phospholipid metabolism. In terms of biological role, exhibits both acyltransferase and acetyltransferase activities. Catalyzes the conversion of lysophosphatidylcholine (1-acyl-sn-glycero-3-phosphocholine or LPC) into phosphatidylcholine (1,2-diacyl-sn-glycero-3-phosphocholine or PC). Catalyzes the conversion 1-acyl-sn-glycerol-3-phosphate (lysophosphatidic acid or LPA) into 1,2-diacyl-sn-glycerol-3-phosphate (phosphatidic acid or PA) by incorporating an acyl moiety at the sn-2 position of the glycerol backbone. Involved in platelet-activating factor (PAF) biosynthesis by catalyzing the conversion of the PAF precursor, 1-O-alkyl-sn-glycero-3-phosphocholine (lyso-PAF) into 1-O-alkyl-2-acetyl-sn-glycero-3-phosphocholine (PAF). Also converts lyso-PAF to 1-O-alkyl-2-acyl-sn-glycero-3-phosphocholine (PC), a major component of cell membranes and a PAF precursor. Under resting conditions, acyltransferase activity is preferred. Upon acute inflammatory stimulus, acetyltransferase activity is enhanced and PAF synthesis increases. Involved in the regulation of lipid droplet number and size. In Homo sapiens (Human), this protein is Lysophosphatidylcholine acyltransferase 2 (LPCAT2).